The chain runs to 224 residues: Late embryogenesis abundant protein, group 3 (224 aa).

Disordered regions lie at residues 1 to 169 (MASN…KDKT) and 193 to 224 (NTLG…TRNH). Residues 13-23 (GETKARNEEKT) are compositionally biased toward basic and acidic residues. Repeat copies occupy residues 26–36 (VMGATKDKAGQ), 37–47 (TTEATKQKAGE), 48–58 (TTEATKQKAAE), 59–69 (TTEAAKQKASE), and 70–80 (TAEATKQKAAE). The tract at residues 26–153 (VMGATKDKAG…TEAAKQKASE (128 aa)) is 12 X 11 AA tandem repeats. 3 stretches are compositionally biased toward basic and acidic residues: residues 41–85 (TKQK…KDKT), 92–109 (AKEK…RAAQ), and 120–151 (EKTE…KQKA). The stretch at 81 to 87 (AKDKTAQ) is one 6; truncated repeat. A run of 5 repeats spans residues 88 to 98 (TAQAAKEKTYE), 99 to 109 (TAQSAKERAAQ), 121 to 131 (KTEAAKQKAAE), 132 to 142 (TTEAARQKAAE), and 143 to 153 (ATEAAKQKASE). The segment covering 200–224 (DNTITTKDNTTGATTKDTTTTTRNH) has biased composition (low complexity).

This sequence belongs to the LEA type 4 family.

The chain is Late embryogenesis abundant protein, group 3 from Triticum aestivum (Wheat).